A 406-amino-acid chain; its full sequence is Aminomethyltransferase, mitochondrial (406 aa).

Residues 1–29 (MRGGLWQLGQSITRRLAQADKKTIGRRCF) constitute a mitochondrion transit peptide. Residues Glu234, Arg265, and Tyr403 each coordinate substrate.

The protein belongs to the GcvT family. In terms of assembly, the glycine cleavage system is composed of four proteins: P, T, L and H.

It is found in the mitochondrion. It carries out the reaction N(6)-[(R)-S(8)-aminomethyldihydrolipoyl]-L-lysyl-[protein] + (6S)-5,6,7,8-tetrahydrofolate = N(6)-[(R)-dihydrolipoyl]-L-lysyl-[protein] + (6R)-5,10-methylene-5,6,7,8-tetrahydrofolate + NH4(+). The glycine cleavage system catalyzes the degradation of glycine. This chain is Aminomethyltransferase, mitochondrial (GDCST), found in Solanum tuberosum (Potato).